The sequence spans 254 residues: 3-deoxy-manno-octulosonate cytidylyltransferase (254 aa).

It belongs to the KdsB family.

It is found in the cytoplasm. The enzyme catalyses 3-deoxy-alpha-D-manno-oct-2-ulosonate + CTP = CMP-3-deoxy-beta-D-manno-octulosonate + diphosphate. The protein operates within nucleotide-sugar biosynthesis; CMP-3-deoxy-D-manno-octulosonate biosynthesis; CMP-3-deoxy-D-manno-octulosonate from 3-deoxy-D-manno-octulosonate and CTP: step 1/1. It functions in the pathway bacterial outer membrane biogenesis; lipopolysaccharide biosynthesis. Functionally, activates KDO (a required 8-carbon sugar) for incorporation into bacterial lipopolysaccharide in Gram-negative bacteria. The protein is 3-deoxy-manno-octulosonate cytidylyltransferase of Chlamydia trachomatis serovar L2 (strain ATCC VR-902B / DSM 19102 / 434/Bu).